The sequence spans 727 residues: Cyclin-T1 (727 aa).

Serine 117 bears the Phosphoserine mark. The Nuclear localization signal signature appears at 253–270; that stretch reads KRIWNWRAWQADRKTKAD. Lysine 343 participates in a covalent cross-link: Glycyl lysine isopeptide (Lys-Gly) (interchain with G-Cter in SUMO2). Serine 389 carries the post-translational modification Phosphoserine. The stretch at 389–420 forms a coiled coil; that stretch reads SLKEYRAKHAEELAAQKRQLENMEANVKSQYA. Lysine 391 carries the post-translational modification N6-acetyllysine. Lysine 416 participates in a covalent cross-link: Glycyl lysine isopeptide (Lys-Gly) (interchain with G-Cter in SUMO2). Serine 417 and serine 475 each carry ADP-ribosylserine. The histidine-rich domain (HRD) stretch occupies residues 481–551; sequence IKMRIKVHTA…RLGDPKHSSQ (71 aa). Lysine 482 is covalently cross-linked (Glycyl lysine isopeptide (Lys-Gly) (interchain with G-Cter in SUMO2)). Lysine 486 bears the N6-(ADP-ribosyl)lysine mark. Basic and acidic residues predominate over residues 487–507; that stretch reads VHTAADKHNSVDDSVTKNREH. Disordered stretches follow at residues 487 to 631 and 691 to 727; these read VHTA…QPSC and YMNPRAGGMSSRSGNTDKPRPPPLPSEPPPPLPPLPK. Position 488 is an ADP-ribosylhistidine (histidine 488). Phosphoserine occurs at positions 496 and 500. Positions 508–531 are enriched in basic residues; the sequence is KEKHKTHPSNHHHHHNHHSHKHSH. Residue histidine 531 is modified to ADP-ribosylhistidine. Residues serine 532, serine 550, and serine 553 each carry the ADP-ribosylserine modification. Position 557 is an ADP-ribosylhistidine (histidine 557). Low complexity predominate over residues 561–571; sequence SLSSSFSSSSS. Serine 564 carries the post-translational modification ADP-ribosylserine. A Phosphoserine modification is found at serine 565. Polar residues predominate over residues 616–631; that stretch reads GHSSDTSGLHFSQPSC. The span at 711–727 shows a compositional bias: pro residues; the sequence is PPPLPSEPPPPLPPLPK.

The protein belongs to the cyclin family. Cyclin C subfamily. Cyclin-T1 is the predominant cyclin that associates with CDK9 to form a heterodimer called P-TEFb. P-TEFb forms a complex with AFF4/AF5Q31. Component of a complex which is at least composed of HTATSF1/Tat-SF1, P-TEFb complex, RNA pol II, SUPT5H, and NCL/nucleolin. Component of the 7SK snRNP complex at least composed of P-TEFb (composed of CDK9 and CCNT1/cyclin-T1), HEXIM1, HEXIM2, BCDIN3, SART3 proteins and 7SK and U6 snRNAs. Interacts (via central region) with ZMYND8 (via N-terminus); the interaction is direct and the association appears to occur between homodimeric ZMYND8 and the activated form of the P-TEFb complex. Interacts with BRD4, targets chromatin binding. Interacts with JMJD6. Interacts with MDFIC. Interacts with HSF1. Interacts with HTATSF1. Interacts with TBX21. As to quaternary structure, (Microbial infection) Binds to BIV Tat, however Tat binds TAR RNA in a Cyc-T1-independent mode. Post-translationally, ADP-ribosylation on serine residues by PARP1 in response to DNA damage disrupts the phase separation activity of CCNT1, thereby preventing activation of CDK9.

It localises to the nucleus. Functionally, regulatory subunit of the cyclin-dependent kinase pair (CDK9/cyclin-T1) complex, also called positive transcription elongation factor B (P-TEFb), which facilitates the transition from abortive to productive elongation by phosphorylating the CTD (C-terminal domain) of the large subunit of RNA polymerase II (RNA Pol II). Required to activate the protein kinase activity of CDK9: acts by mediating formation of liquid-liquid phase separation (LLPS) that enhances binding of P-TEFb to the CTD of RNA Pol II. This Bos taurus (Bovine) protein is Cyclin-T1 (CCNT1).